A 499-amino-acid chain; its full sequence is Trichothecene C-4 hydroxylase (499 aa).

The helical transmembrane segment at Val-7–Asn-29 threads the bilayer. Asn-173 and Asn-287 each carry an N-linked (GlcNAc...) asparagine glycan. Cys-442 provides a ligand contact to heme. Asn-473 carries N-linked (GlcNAc...) asparagine glycosylation.

The protein belongs to the cytochrome P450 family. Heme serves as cofactor.

It is found in the membrane. It participates in sesquiterpene biosynthesis; trichothecene biosynthesis. Trichothecene C-4 hydroxylase; part of the gene cluster that mediates the production of the antimicrobial trichothecene harzianum A (HA) that plays a role in Botrytis cinerea antagonistic activity and plant defense priming. The biosynthesis of harzianum A begins with the cyclization of farnesyl diphosphate to trichodiene and is catalyzed by the trichodiene synthase TRI5. Trichodiene undergoes a series of oxygenations catalyzed by the cytochrome P450 monooxygenase TRI4. TRI4 controls the addition of 3 oxygens at C-2, C-11, and the C-12, C-13-epoxide to form the intermediate isotrichodiol. Isotrichodiol then undergoes a non-enzymatic isomerization and cyclization to form 12,13-epoxytrichothec-9-ene (EPT) which is further converted to trichodermol by the cytochrome P450 monooxygenase TRI11 via C-4 hydroxylation. The last step of HA synthesis is esterification of an octatriendioyl moiety to the C-4 oxygen of trichodermol. The octatriendioyl moiety is probably produced by the polyketide synthase TRI17 and the esterification performed by the trichothecene O-acetyltransferase TRI3. The chain is Trichothecene C-4 hydroxylase from Trichoderma arundinaceum.